A 209-amino-acid polypeptide reads, in one-letter code: MKRLVTGLLALSLFLAACGQDSDQQKDGNKEKDDKAKTEQQDKKTNDSSKDKKDNKDDSKDVNKDNKDNSANDNQQQSNSNATNNDQNQTNNNQSSNNQANNNQKSSYVAPYYGQNAAPVARQIYPFNGNKNQALQQLPNFQTALNAANNEANKFGSNNKVYNDYSIEEHNGNYKYVFSFKDPNANGKYSIVTVDYTGQAMVTDPNYQQ.

The first 17 residues, Met-1–Ala-17, serve as a signal peptide directing secretion. The tract at residues Ala-17–Lys-105 is disordered. Cys-18 carries N-palmitoyl cysteine lipidation. Residue Cys-18 is the site of S-diacylglycerol cysteine attachment. Residues Asp-23–Ser-70 are compositionally biased toward basic and acidic residues. Over residues Ala-71–Lys-105 the composition is skewed to low complexity.

It is found in the cell membrane. This is an uncharacterized protein from Staphylococcus aureus (strain COL).